The sequence spans 523 residues: Cytochrome b5 reductase 4 (523 aa).

One can recognise a Cytochrome b5 heme-binding domain in the interval L54 to A130. 2 residues coordinate heme: H89 and H112. The region spanning E167–G258 is the CS domain. An FAD-binding FR-type domain is found at L275–F387. FAD is bound by residues E367–G382 and D394–L426.

Belongs to the flavoprotein pyridine nucleotide cytochrome reductase family. The cofactor is FAD.

It localises to the endoplasmic reticulum. The catalysed reaction is 2 Fe(III)-[cytochrome b5] + NADH = 2 Fe(II)-[cytochrome b5] + NAD(+) + H(+). NADH-cytochrome b5 reductase involved in endoplasmic reticulum stress response pathway. This is Cytochrome b5 reductase 4 (cyb5r4) from Xenopus tropicalis (Western clawed frog).